Consider the following 95-residue polypeptide: Small ribosomal subunit protein bS6 (95 aa).

This sequence belongs to the bacterial ribosomal protein bS6 family.

Its function is as follows. Binds together with bS18 to 16S ribosomal RNA. The sequence is that of Small ribosomal subunit protein bS6 from Caldanaerobacter subterraneus subsp. tengcongensis (strain DSM 15242 / JCM 11007 / NBRC 100824 / MB4) (Thermoanaerobacter tengcongensis).